The primary structure comprises 371 residues: Bifunctional enzyme IspD/IspF (371 aa).

Residues 1 to 210 (MSEMSLIMLA…LDLPTPSFEI (210 aa)) are 2-C-methyl-D-erythritol 4-phosphate cytidylyltransferase. The 2-C-methyl-D-erythritol 2,4-cyclodiphosphate synthase stretch occupies residues 211 to 371 (FTGNGFDVHE…NLKYFDWTRL (161 aa)). A divalent metal cation-binding residues include Asp-217 and His-219. Residues 217 to 219 (DVH) and 243 to 244 (HS) contribute to the 4-CDP-2-C-methyl-D-erythritol 2-phosphate site. Position 251 (His-251) interacts with a divalent metal cation. 4-CDP-2-C-methyl-D-erythritol 2-phosphate-binding positions include 265–267 (DIG), 270–274 (YPDTD), 309–315 (AQSPKLK), 341–344 (TTTE), Phe-348, and Arg-351.

In the N-terminal section; belongs to the IspD/TarI cytidylyltransferase family. IspD subfamily. The protein in the C-terminal section; belongs to the IspF family. It depends on a divalent metal cation as a cofactor.

The catalysed reaction is 2-C-methyl-D-erythritol 4-phosphate + CTP + H(+) = 4-CDP-2-C-methyl-D-erythritol + diphosphate. The enzyme catalyses 4-CDP-2-C-methyl-D-erythritol 2-phosphate = 2-C-methyl-D-erythritol 2,4-cyclic diphosphate + CMP. It functions in the pathway isoprenoid biosynthesis; isopentenyl diphosphate biosynthesis via DXP pathway; isopentenyl diphosphate from 1-deoxy-D-xylulose 5-phosphate: step 2/6. It participates in isoprenoid biosynthesis; isopentenyl diphosphate biosynthesis via DXP pathway; isopentenyl diphosphate from 1-deoxy-D-xylulose 5-phosphate: step 4/6. Bifunctional enzyme that catalyzes the formation of 4-diphosphocytidyl-2-C-methyl-D-erythritol from CTP and 2-C-methyl-D-erythritol 4-phosphate (MEP) (IspD), and catalyzes the conversion of 4-diphosphocytidyl-2-C-methyl-D-erythritol 2-phosphate (CDP-ME2P) to 2-C-methyl-D-erythritol 2,4-cyclodiphosphate (ME-CPP) with a corresponding release of cytidine 5-monophosphate (CMP) (IspF). The chain is Bifunctional enzyme IspD/IspF from Campylobacter jejuni subsp. jejuni serotype O:2 (strain ATCC 700819 / NCTC 11168).